We begin with the raw amino-acid sequence, 130 residues long: Small ribosomal subunit protein uS9 (130 aa).

Belongs to the universal ribosomal protein uS9 family.

This is Small ribosomal subunit protein uS9 from Oceanobacillus iheyensis (strain DSM 14371 / CIP 107618 / JCM 11309 / KCTC 3954 / HTE831).